We begin with the raw amino-acid sequence, 61 residues long: Photosystem II reaction center protein K (61 aa).

A propeptide spanning residues 1 to 24 (MLNIFSLICICLNSALYSSSLFFA) is cleaved from the precursor. Residues 40–60 (MPVIPLFFFLLAFVWQAAVSF) traverse the membrane as a helical segment.

It belongs to the PsbK family. As to quaternary structure, PSII is composed of 1 copy each of membrane proteins PsbA, PsbB, PsbC, PsbD, PsbE, PsbF, PsbH, PsbI, PsbJ, PsbK, PsbL, PsbM, PsbT, PsbX, PsbY, PsbZ, Psb30/Ycf12, at least 3 peripheral proteins of the oxygen-evolving complex and a large number of cofactors. It forms dimeric complexes.

It is found in the plastid. The protein localises to the chloroplast thylakoid membrane. Functionally, one of the components of the core complex of photosystem II (PSII). PSII is a light-driven water:plastoquinone oxidoreductase that uses light energy to abstract electrons from H(2)O, generating O(2) and a proton gradient subsequently used for ATP formation. It consists of a core antenna complex that captures photons, and an electron transfer chain that converts photonic excitation into a charge separation. The protein is Photosystem II reaction center protein K of Panax ginseng (Korean ginseng).